The chain runs to 330 residues: Endochitinase Ziz m 1.0101 (330 aa).

The first 24 residues, 1–24 (MVPQAKLVVASLILTSALIQTSEA), serve as a signal peptide directing secretion. The GH18 domain maps to 26–330 (GGIATYWGQY…LRTKFMYQNA (305 aa)). 3 disulfides stabilise this stretch: Cys47–Cys90, Cys77–Cys80, and Cys187–Cys219. The interval 72–86 (NISGHCSDCTFLGEE) is binds to IgE in 70% of the 10 patients tested allergic to Indian jujube and latex. Residues 292 to 301 (VWNRYYDLKT) form a binds to IgE in 100% of the 10 patients tested allergic to Indian jujube and latex; sufficient for prediction of the presence of allergic reactions in these patients region. Binds to IgE in 70% of the 10 patients tested allergic to Indian jujube and latex regions lie at residues 300–311 (KTNYSSSIILEY) and 309–320 (LEYVNSGTKYLP).

It belongs to the glycosyl hydrolase 18 family. Chitinase class II subfamily.

The protein localises to the secreted. The enzyme catalyses Random endo-hydrolysis of N-acetyl-beta-D-glucosaminide (1-&gt;4)-beta-linkages in chitin and chitodextrins.. In terms of biological role, defense against chitin containing fungal pathogens. The protein is Endochitinase Ziz m 1.0101 of Ziziphus mauritiana (Indian jujube).